We begin with the raw amino-acid sequence, 459 residues long: Cell division protein FtsZ (459 aa).

GTP is bound by residues 25–29 (GAGSN), 112–114 (GTG), E143, R147, and D191. Disordered stretches follow at residues 383–405 (DQAPNSTNDDMEPRVSLTNDAGE) and 427–459 (IPERKNVVVGMPDEETKESDIHDIPAFLRKKRD).

This sequence belongs to the FtsZ family. Homodimer. Polymerizes to form a dynamic ring structure in a strictly GTP-dependent manner. Interacts directly with several other division proteins.

Its subcellular location is the cytoplasm. In terms of biological role, essential cell division protein that forms a contractile ring structure (Z ring) at the future cell division site. The regulation of the ring assembly controls the timing and the location of cell division. One of the functions of the FtsZ ring is to recruit other cell division proteins to the septum to produce a new cell wall between the dividing cells. Binds GTP and shows GTPase activity. The sequence is that of Cell division protein FtsZ from Rickettsia bellii (strain RML369-C).